Here is a 101-residue protein sequence, read N- to C-terminus: uncharacterized protein (101 aa).

This is an uncharacterized protein from Homo sapiens (Human).